Consider the following 245-residue polypeptide: tRNA pseudouridine synthase A (245 aa).

The Nucleophile role is filled by Asp-52. A substrate-binding site is contributed by Tyr-111.

Belongs to the tRNA pseudouridine synthase TruA family. Homodimer.

The catalysed reaction is uridine(38/39/40) in tRNA = pseudouridine(38/39/40) in tRNA. Its function is as follows. Formation of pseudouridine at positions 38, 39 and 40 in the anticodon stem and loop of transfer RNAs. The chain is tRNA pseudouridine synthase A from Zymomonas mobilis subsp. mobilis (strain ATCC 31821 / ZM4 / CP4).